The primary structure comprises 862 residues: Alpha,alpha-trehalose-phosphate synthase [UDP-forming] 5 (862 aa).

S5 bears the Phosphoserine mark. A Phosphothreonine modification is found at T32. Residues 60–546 (DRIIIVGNQL…ARSFIQDLER (487 aa)) are glycosyltransferase.

This sequence in the N-terminal section; belongs to the glycosyltransferase 20 family. The protein in the C-terminal section; belongs to the trehalose phosphatase family. Binds to the phosphopeptide-binding site of GRF/14-3-3 and to MBF1c. Both Ser-5 and Thr-32 must be phosphorylated for binding to GRF/14-3-3. In terms of tissue distribution, low expression in leaves, stems, flower buds, flowers and siliques.

It carries out the reaction D-glucose 6-phosphate + UDP-alpha-D-glucose = alpha,alpha-trehalose 6-phosphate + UDP + H(+). The polypeptide is Alpha,alpha-trehalose-phosphate synthase [UDP-forming] 5 (TPS5) (Arabidopsis thaliana (Mouse-ear cress)).